The primary structure comprises 388 residues: Na(+)/H(+) antiporter NhaA (388 aa).

The Cytoplasmic portion of the chain corresponds to 1-11 (MKHLHRFFSSD). Residues 12-31 (ASGGIILIIAAILAMIMANS) traverse the membrane as a helical segment. Over 32–58 (GATSGWYHDFLETPVQLRVGSLEINKN) the chain is Periplasmic. Residues 59-80 (MLLWINDALMAVFFLLVGLEVK) form a helical membrane-spanning segment. Topologically, residues 81–96 (RELMQGSLASLRQAAF) are cytoplasmic. Residues 97–116 (PVIAAIGGMIVPALLYLAFN) traverse the membrane as a helical segment. The Periplasmic portion of the chain corresponds to 117-122 (YADPIT). A helical transmembrane segment spans residues 123–130 (REGWAIPA). The Cytoplasmic portion of the chain corresponds to 131–154 (ATDIAFALGVLALLGSRVPLVLKI). Residues 155-176 (FLMALAIIDDLGAIIIIALFYT) form a helical membrane-spanning segment. Residues 177–180 (NDLS) lie on the Periplasmic side of the membrane. Residues 181 to 200 (MASLGVAAVAIAVLAVLNLC) form a helical membrane-spanning segment. Residues 201-204 (GVRR) lie on the Cytoplasmic side of the membrane. A helical transmembrane segment spans residues 205–222 (TGVYILVGVVLWTAVLKS). A topological domain (periplasmic) is located at residue glycine 223. The chain crosses the membrane as a helical span at residues 224–236 (VHATLAGVIVGFF). Residues 237-253 (IPLKEKHGRSPAKRLEH) lie on the Cytoplasmic side of the membrane. Residues 254 to 272 (VLHPWVAYLILPLFAFANA) form a helical membrane-spanning segment. The Periplasmic portion of the chain corresponds to 273–286 (GVSLQGVTLDGLTS). Residues 287–310 (ILPLGIIAGLLIGKPLGISLFCWL) traverse the membrane as a helical segment. The Cytoplasmic portion of the chain corresponds to 311 to 339 (ALRLKLAHLPEGTTYQQIMVVGILCGIGF). The chain crosses the membrane as a helical span at residues 340–350 (TMSIFIASLAF). Residues 351 to 357 (GSVDPEL) lie on the Periplasmic side of the membrane. The chain crosses the membrane as a helical span at residues 358 to 380 (INWAKLGILVGSISSAVIGYSWL). Residues 381 to 388 (RVRLRPSV) are Cytoplasmic-facing.

Belongs to the NhaA Na(+)/H(+) (TC 2.A.33) antiporter family.

The protein resides in the cell inner membrane. It catalyses the reaction Na(+)(in) + 2 H(+)(out) = Na(+)(out) + 2 H(+)(in). In terms of biological role, na(+)/H(+) antiporter that extrudes sodium in exchange for external protons. This is Na(+)/H(+) antiporter NhaA from Shigella flexneri.